We begin with the raw amino-acid sequence, 134 residues long: Spermadhesin-1 (134 aa).

The signal sequence occupies residues 1-20; that stretch reads MKLSSVIPWALLLSTATVDS. 2 disulfides stabilise this stretch: C30-C51 and C74-C95. The CUB domain occupies 30–131; the sequence is CGGILKEESG…SFYEVLYFQD (102 aa).

The protein belongs to the spermadhesin family. Seminal vesicle tissue, ampulla and weakly in tissue of epididymis.

The protein localises to the secreted. In terms of biological role, stimulates cell division and progesterone secretion of bovine granulosa cells in vitro in a potent and dose dependent manner. This protein appears to be a potent growth factor with effects on ovarian granulosa cells. The sequence is that of Spermadhesin-1 (SPADH1) from Bos taurus (Bovine).